The sequence spans 229 residues: Isopentenyl-diphosphate delta-isomerase (229 aa).

Lys39 serves as a coordination point for substrate. Mg(2+)-binding residues include His43 and His54. Residues Leu52–Leu202 enclose the Nudix hydrolase domain. Residues Gln72 and Lys77 each coordinate substrate. Cys89 is an active-site residue. Ser90 lines the substrate pocket. Positions 152 and 154 each coordinate Mg(2+). The active site involves Glu154.

It belongs to the IPP isomerase type 1 family. Mg(2+) is required as a cofactor.

It localises to the cytoplasm. Its subcellular location is the nucleus. It carries out the reaction isopentenyl diphosphate = dimethylallyl diphosphate. It functions in the pathway isoprenoid biosynthesis; dimethylallyl diphosphate biosynthesis; dimethylallyl diphosphate from isopentenyl diphosphate: step 1/1. In terms of biological role, isopentenyl-diphosphate delta-isomerase; part of the second module of ergosterol biosynthesis pathway that includes the middle steps of the pathway. Idi1 catalyzes the 1,3-allylic rearrangement of isopentenyl (IPP) to its highly electrophilic allylic isomer, dimethylallyl diphosphate (DMAPP). The second module is carried out in the vacuole and involves the formation of farnesyl diphosphate, which is also an important intermediate in the biosynthesis of ubiquinone, dolichol, heme and prenylated proteins. Activity by the mevalonate kinase erg12 first converts mevalonate into 5-phosphomevalonate. 5-phosphomevalonate is then further converted to 5-diphosphomevalonate by the phosphomevalonate kinase erg8. The diphosphomevalonate decarboxylase mvd1 then produces isopentenyl diphosphate. The isopentenyl-diphosphate delta-isomerase idi1 then catalyzes the 1,3-allylic rearrangement of the homoallylic substrate isopentenyl (IPP) to its highly electrophilic allylic isomer, dimethylallyl diphosphate (DMAPP). Finally the farnesyl diphosphate synthase fps1 catalyzes the sequential condensation of isopentenyl pyrophosphate with dimethylallyl pyrophosphate, and then with the resultant geranylpyrophosphate to the ultimate product farnesyl pyrophosphate. This is Isopentenyl-diphosphate delta-isomerase from Schizosaccharomyces pombe (strain 972 / ATCC 24843) (Fission yeast).